Consider the following 1191-residue polypeptide: Serine/threonine-protein kinase dkf-2 (1191 aa).

Disordered regions lie at residues 11–48 (YTSM…TTTS) and 108–155 (MLSR…GGHV). Over residues 123–139 (TPDDHYSNPSDKRREVP) the composition is skewed to basic and acidic residues. The span at 140-150 (SIRSTSSNSSS) shows a compositional bias: low complexity. 2 Phorbol-ester/DAG-type zinc fingers span residues 314-364 (PHTL…PNNC) and 466-531 (PHTF…AKDC). The disordered stretch occupies residues 549–594 (VSEDRDDDLSLRSGSGGHKKAQNTPSAPLQGSEGSGSPGGAVVSFA). Positions 632–713 (LLKEGWIVHY…VYFVYSSLTD (82 aa)) constitute a PH domain. The tract at residues 730 to 786 (PSTVSSTDSGYLGSSGASSSCVRSREGSTVSSTITVDRTRRGGSTTSTENSEAESES) is disordered. Residues 738 to 751 (SGYLGSSGASSSCV) show a composition bias toward low complexity. Residues 756-765 (GSTVSSTITV) show a composition bias toward polar residues. Residues 773–786 (STTSTENSEAESES) are compositionally biased toward low complexity. The region spanning 891–1147 (IFAEEVLGSG…VAKAQSHIWM (257 aa)) is the Protein kinase domain. Residues 897–905 (LGSGQFGTV) and lysine 920 contribute to the ATP site. Aspartate 1014 (proton acceptor) is an active-site residue. Residues serine 1046 and serine 1050 each carry the phosphoserine modification.

Belongs to the protein kinase superfamily. CAMK Ser/Thr protein kinase family. PKD subfamily. The cofactor is Mg(2+). Post-translationally, phosphorylation on Ser-1046 is the dominant regulator of catalysis, phosphorylation on Ser-1050 has a lesser effect. Prolonged phosphorylation results in ubiquitination and degradation.

It localises to the cytoplasm. The protein resides in the membrane. It catalyses the reaction L-seryl-[protein] + ATP = O-phospho-L-seryl-[protein] + ADP + H(+). The catalysed reaction is L-threonyl-[protein] + ATP = O-phospho-L-threonyl-[protein] + ADP + H(+). Activated by DAG and phorbol esters. Phorbol-ester/DAG-type domain 1 binds phorbol ester with low affinity. Phorbol-ester/DAG-type domain 2 binds phorbol ester with high affinity and targets the kinase to the cell periphery, enabling phosphorylation and activation by colocalized tpa-1. Both domains 1 and 2 appear to bind DAG with equal affinity so may contribute equally to translocation and activation. Functionally, converts transient diacylglycerol (DAG) signals into prolonged physiological effects, downstream of PKC. Acts in the intestine to regulate both innate immunity by promoting activation of pmk-1 and also stress response and life span by acting as an upstream, negative regulator of the daf-16 transcription factor. The chain is Serine/threonine-protein kinase dkf-2 from Caenorhabditis briggsae.